The chain runs to 441 residues: Velvet complex subunit B (441 aa).

Polar residues-rich tracts occupy residues 1–14 (MNPG…QPGH) and 60–75 (MMQQ…STTE). A disordered region spans residues 1 to 104 (MNPGYSSTAS…QPHVGEQDGR (104 aa)). Residues 100–426 (EQDGRKYRLD…AGQGIKIPIR (327 aa)) enclose the Velvet domain.

Belongs to the velvet family. VelB subfamily. In terms of assembly, component of the heterotrimeric velvet complex composed of LAEA, VEA and VELB; VEA acting as a bridging protein between LAEA and VELB. Forms a heterodimeric complex with VOSA; the formation of the VELB-VOSA complex is light-dependent.

The protein localises to the nucleus. It is found in the cytoplasm. Its function is as follows. Component of the velvet transcription factor complex that controls sexual/asexual developmental ratio in response to light, promoting sexual development in the darkness while stimulating asexual sporulation under illumination. The velvet complex acts as a global regulator for secondary metabolite gene expression. Component of the VELB-VOSA heterodimeric complex that plays a dual role in activating genes associated with spore maturation and repressing certain development-associated genes. The VELB-VOSA complex binds DNA through the DNA-binding domain of VOSA that recognizes an 11-nucleotide consensus sequence 5'-CTGGCCGCGGC-3' consisting of two motifs in the promoters of key developmental regulatory genes. Involved in the regulation of the response to eactive oxygen species (ROS) stress. The sequence is that of Velvet complex subunit B from Pyricularia oryzae (strain 70-15 / ATCC MYA-4617 / FGSC 8958) (Rice blast fungus).